The primary structure comprises 1119 residues: Protein translocase subunit SecA (1119 aa).

Residues Gln177, 195 to 199 (GEGKT), and Asp692 each bind ATP. The interval 1025-1081 (APSIHEARQTKSKEKVETRKEEIPNMDERAAQSRAAGNTQRQQPEVTETIVRDRPKI) is disordered. Residues 1029-1055 (HEARQTKSKEKVETRKEEIPNMDERAA) show a composition bias toward basic and acidic residues. Residues 1059 to 1070 (AAGNTQRQQPEV) show a composition bias toward polar residues.

This sequence belongs to the SecA family. Monomer and homodimer. Part of the essential Sec protein translocation apparatus which comprises SecA, SecYEG and auxiliary proteins SecDF. Other proteins may also be involved.

The protein resides in the cell inner membrane. Its subcellular location is the cytoplasm. The enzyme catalyses ATP + H2O + cellular proteinSide 1 = ADP + phosphate + cellular proteinSide 2.. Its function is as follows. Part of the Sec protein translocase complex. Interacts with the SecYEG preprotein conducting channel. Has a central role in coupling the hydrolysis of ATP to the transfer of proteins into and across the cell membrane, serving as an ATP-driven molecular motor driving the stepwise translocation of polypeptide chains across the membrane. The chain is Protein translocase subunit SecA from Christiangramia forsetii (strain DSM 17595 / CGMCC 1.15422 / KT0803) (Gramella forsetii).